A 623-amino-acid polypeptide reads, in one-letter code: Regulatory solute carrier protein family 1 member 1 (623 aa).

Polar residues-rich tracts occupy residues Met1–Pro16, Cys83–Pro99, and Glu133–Gln144. Disordered stretches follow at residues Met1–Ile48, Arg71–Pro99, Ser116–Asp189, and Glu433–Thr493. 3 stretches are compositionally biased toward basic and acidic residues: residues Ile150–Tyr159, Gln170–Glu180, and Leu460–Val473. The segment covering Asn474–His491 has biased composition (polar residues). One can recognise a UBA domain in the interval Ile577 to Lys617.

In terms of assembly, interacts with YRDC. Renal outer cortex and outer medulla, small intestine and liver.

It localises to the cell membrane. The protein localises to the nucleus. Its subcellular location is the golgi apparatus. The protein resides in the trans-Golgi network. Functionally, mediates transcriptional and post-transcriptional regulation of SLC5A1. Inhibits a dynamin and PKC-dependent exocytotic pathway of SLC5A1. Also involved in transcriptional regulation of SLC22A2. Exhibits glucose-dependent, short-term inhibition of SLC5A1 and SLC22A2 by inhibiting the release of vesicles from the trans-Golgi network. The polypeptide is Regulatory solute carrier protein family 1 member 1 (RSC1A1) (Sus scrofa (Pig)).